Reading from the N-terminus, the 259-residue chain is UPF0246 protein MADE_1015435 (259 aa).

Belongs to the UPF0246 family.

The polypeptide is UPF0246 protein MADE_1015435 (Alteromonas mediterranea (strain DSM 17117 / CIP 110805 / LMG 28347 / Deep ecotype)).